The following is a 94-amino-acid chain: Pyrimidine/purine nucleoside phosphorylase (94 aa).

The protein belongs to the nucleoside phosphorylase PpnP family.

It catalyses the reaction a purine D-ribonucleoside + phosphate = a purine nucleobase + alpha-D-ribose 1-phosphate. It carries out the reaction adenosine + phosphate = alpha-D-ribose 1-phosphate + adenine. The catalysed reaction is cytidine + phosphate = cytosine + alpha-D-ribose 1-phosphate. The enzyme catalyses guanosine + phosphate = alpha-D-ribose 1-phosphate + guanine. It catalyses the reaction inosine + phosphate = alpha-D-ribose 1-phosphate + hypoxanthine. It carries out the reaction thymidine + phosphate = 2-deoxy-alpha-D-ribose 1-phosphate + thymine. The catalysed reaction is uridine + phosphate = alpha-D-ribose 1-phosphate + uracil. The enzyme catalyses xanthosine + phosphate = alpha-D-ribose 1-phosphate + xanthine. Catalyzes the phosphorolysis of diverse nucleosides, yielding D-ribose 1-phosphate and the respective free bases. Can use uridine, adenosine, guanosine, cytidine, thymidine, inosine and xanthosine as substrates. Also catalyzes the reverse reactions. This is Pyrimidine/purine nucleoside phosphorylase from Teredinibacter turnerae (strain ATCC 39867 / T7901).